The sequence spans 374 residues: Pectate lyase 1 (374 aa).

A signal peptide spans M1–A22. C93 and C176 form a disulfide bridge. D150, D152, E187, and D191 together coordinate Ca(2+). R239 is a catalytic residue. Residues C350 and C373 are joined by a disulfide bond.

It belongs to the polysaccharide lyase 1 family. PLADES subfamily. The cofactor is Ca(2+).

It localises to the secreted. It carries out the reaction Eliminative cleavage of (1-&gt;4)-alpha-D-galacturonan to give oligosaccharides with 4-deoxy-alpha-D-galact-4-enuronosyl groups at their non-reducing ends.. Its pathway is glycan metabolism; pectin degradation; 2-dehydro-3-deoxy-D-gluconate from pectin: step 2/5. Functionally, involved in maceration and soft-rotting of plant tissue. The protein is Pectate lyase 1 (pel1) of Pectobacterium atrosepticum (strain SCRI 1043 / ATCC BAA-672) (Erwinia carotovora subsp. atroseptica).